A 327-amino-acid chain; its full sequence is Beta-1,4-galactosyltransferase 7 (327 aa).

The Cytoplasmic portion of the chain corresponds to Met1 to Ser30. Residues Val31–Leu51 form a helical; Signal-anchor for type II membrane protein membrane-spanning segment. Topologically, residues Ser52 to Ser327 are lumenal. The segment at Gly63–Asp87 is disordered. UDP-alpha-D-galactose is bound by residues Pro100–Arg104 and Phe139–Arg141. Asn154 carries N-linked (GlcNAc...) asparagine glycosylation. UDP-alpha-D-galactose contacts are provided by residues Val164 to Asp165, Tyr194, and Trp224. Position 165 (Asp165) interacts with Mn(2+). Arg226–Asp229 is an N-acetyl-D-glucosamine binding site. His257 is a Mn(2+) binding site. UDP-alpha-D-galactose-binding positions include His257–His259 and Arg266. Cys316 and Cys324 are joined by a disulfide.

This sequence belongs to the glycosyltransferase 7 family. Requires Mn(2+) as cofactor. As to expression, high expression in heart, pancreas and liver, medium in placenta and kidney, low in brain, skeletal muscle and lung.

It is found in the golgi apparatus. The protein localises to the golgi stack membrane. The catalysed reaction is 3-O-(beta-D-xylosyl)-L-seryl-[protein] + UDP-alpha-D-galactose = 3-O-(beta-D-galactosyl-(1-&gt;4)-beta-D-xylosyl)-L-seryl-[protein] + UDP + H(+). Its pathway is protein modification; protein glycosylation. Required for the biosynthesis of the tetrasaccharide linkage region of proteoglycans, especially for small proteoglycans in skin fibroblasts. This chain is Beta-1,4-galactosyltransferase 7 (B4GALT7), found in Homo sapiens (Human).